We begin with the raw amino-acid sequence, 399 residues long: Interferon regulatory factor 9 (399 aa).

Positions 9 to 116 (TRKLRSWIVE…EPYKVYRILP (108 aa)) form a DNA-binding region, IRF tryptophan pentad repeat. The tract at residues 118-189 (GTLPNQPRNQ…CNSELEEGAG (72 aa)) is disordered. The span at 120–129 (LPNQPRNQKS) shows a compositional bias: polar residues. The residue at position 139 (serine 139) is a Phosphoserine. Positions 148-157 (NGRTNGVVNH) are enriched in polar residues. Residues 171-189 (SNRSDSNSNCNSELEEGAG) show a composition bias toward low complexity. Serine 393 is modified (phosphoserine).

This sequence belongs to the IRF family. Interacts with STAT2 in the cytoplasm. Forms the interferon-stimulated gene factor 3 complex (ISGF3) with the heterodimer STAT1:STAT2; upon stimulation.

The protein localises to the nucleus. Functionally, transcription factor that plays an essential role in anti-viral immunity. It mediates signaling by type I IFNs (IFN-alpha and IFN-beta). Following type I IFN binding to cell surface receptors, Jak kinases (TYK2 and JAK1) are activated, leading to tyrosine phosphorylation of STAT1 and STAT2. IRF9/ISGF3G associates with the phosphorylated STAT1:STAT2 dimer to form a complex termed ISGF3 transcription factor, that enters the nucleus. ISGF3 binds to the IFN stimulated response element (ISRE) to activate the transcription of interferon stimulated genes, which drive the cell in an antiviral state. The sequence is that of Interferon regulatory factor 9 (Irf9) from Mus musculus (Mouse).